An 81-amino-acid polypeptide reads, in one-letter code: Defensin-like protein 45 (81 aa).

The signal sequence occupies residues 1 to 27; it reads MAITKTSATFVLLIILAASLSNFNVLA. Disulfide bonds link Cys40–Cys79, Cys44–Cys67, Cys53–Cys77, and Cys57–Cys78.

It belongs to the DEFL family.

The protein localises to the secreted. The sequence is that of Defensin-like protein 45 from Arabidopsis thaliana (Mouse-ear cress).